A 250-amino-acid chain; its full sequence is Ribosomal RNA small subunit methyltransferase J (250 aa).

S-adenosyl-L-methionine is bound by residues 96-97 (RD) and Asp168.

It belongs to the methyltransferase superfamily. RsmJ family.

Its subcellular location is the cytoplasm. The enzyme catalyses guanosine(1516) in 16S rRNA + S-adenosyl-L-methionine = N(2)-methylguanosine(1516) in 16S rRNA + S-adenosyl-L-homocysteine + H(+). In terms of biological role, specifically methylates the guanosine in position 1516 of 16S rRNA. This is Ribosomal RNA small subunit methyltransferase J from Neisseria meningitidis serogroup C (strain 053442).